Here is a 361-residue protein sequence, read N- to C-terminus: Thermostable alkaline protease (361 aa).

The N-terminal stretch at 1–24 (MRQSLKVMVLSTVALLFMANPAAA) is a signal peptide. Positions 25–93 (SEEKKEYLIV…IEKNAEVTIS (69 aa)) are excised as a propeptide. Q94 lines the Ca(2+) pocket. The Peptidase S8 domain occupies 97-360 (PWGISFINTQ…NGLVHAGRAT (264 aa)). D124 functions as the Charge relay system in the catalytic mechanism. A Ca(2+)-binding site is contributed by D132. Residue H154 is the Charge relay system of the active site. Positions 165, 167, 169, 171, 255, 257, and 260 each coordinate Ca(2+). S307 serves as the catalytic Charge relay system.

The protein belongs to the peptidase S8 family. Requires Ca(2+) as cofactor.

It localises to the secreted. Shows keratinolytic activity. This chain is Thermostable alkaline protease, found in Halalkalibacterium halodurans (strain ATCC BAA-125 / DSM 18197 / FERM 7344 / JCM 9153 / C-125) (Bacillus halodurans).